We begin with the raw amino-acid sequence, 393 residues long: Digeranylgeranylglycerophospholipid reductase (393 aa).

Residues Ala13, Asp32, Cys43, Ala44, Gly46, Arg95, Val119, Asp274, and Gly286 each contribute to the FAD site. 2 residues coordinate a 2,3-bis-O-(geranylgeranyl)-sn-glycerol 1-phospholipid: Arg327 and Gly363.

The protein belongs to the geranylgeranyl reductase family. DGGGPL reductase subfamily. FAD serves as cofactor.

It catalyses the reaction a 2,3-bis-O-phytanyl-sn-glycerol 1-phospholipid + 8 A = a 2,3-bis-O-(geranylgeranyl)-sn-glycerol 1-phospholipid + 8 AH2. The enzyme catalyses 2,3-bis-O-(phytanyl)-sn-glycerol 1-phosphate + 8 A = 2,3-bis-O-(geranylgeranyl)-sn-glycerol 1-phosphate + 8 AH2. It carries out the reaction CDP-2,3-bis-O-(geranylgeranyl)-sn-glycerol + 8 AH2 = CDP-2,3-bis-O-(phytanyl)-sn-glycerol + 8 A. The catalysed reaction is archaetidylserine + 8 AH2 = 2,3-bis-O-phytanyl-sn-glycero-3-phospho-L-serine + 8 A. It participates in membrane lipid metabolism; glycerophospholipid metabolism. Functionally, is involved in the reduction of 2,3-digeranylgeranylglycerophospholipids (unsaturated archaeols) into 2,3-diphytanylglycerophospholipids (saturated archaeols) in the biosynthesis of archaeal membrane lipids. Catalyzes the formation of archaetidic acid (2,3-di-O-phytanyl-sn-glyceryl phosphate) from 2,3-di-O-geranylgeranylglyceryl phosphate (DGGGP) via the hydrogenation of each double bond of the isoprenoid chains. Is also probably able to reduce double bonds of geranyl groups in CDP-2,3-bis-O-(geranylgeranyl)-sn-glycerol and archaetidylserine, thus acting at various stages in the biosynthesis of archaeal membrane lipids. This chain is Digeranylgeranylglycerophospholipid reductase, found in Pyrococcus horikoshii (strain ATCC 700860 / DSM 12428 / JCM 9974 / NBRC 100139 / OT-3).